A 61-amino-acid polypeptide reads, in one-letter code: Phospholipase A2 (61 aa).

Residues Tyr27, Gly29, and Gly31 each contribute to the Ca(2+) site. Cysteines 28 and 35 form a disulfide. The active site involves His38. A Ca(2+)-binding site is contributed by Asp39. A disulfide bond links Cys41 and Cys59. Residue Asp60 is part of the active site.

Belongs to the phospholipase A2 family. Group II subfamily. D49 sub-subfamily. In terms of assembly, homodimer. Ca(2+) serves as cofactor. As to expression, expressed by the venom gland.

It is found in the secreted. It carries out the reaction a 1,2-diacyl-sn-glycero-3-phosphocholine + H2O = a 1-acyl-sn-glycero-3-phosphocholine + a fatty acid + H(+). Its function is as follows. Snake venom phospholipase A2 (PLA2) that displays edema-inducing activities. PLA2 catalyzes the calcium-dependent hydrolysis of the 2-acyl groups in 3-sn-phosphoglycerides. This Crotalus atrox (Western diamondback rattlesnake) protein is Phospholipase A2.